The chain runs to 951 residues: Protein inturned (951 aa).

Disordered stretches follow at residues 1–32 (MEHS…FSSS), 189–208 (SSRN…NQRL), and 687–765 (TPKR…GGSG). A PDZ domain is found at 187 to 269 (HQSSRNSKRS…PMQLKLTFET (83 aa)). Residues 715-726 (PTRSSGGSDSGT) show a composition bias toward low complexity. Over residues 743-752 (MARKFGRRES) the composition is skewed to basic and acidic residues. The segment covering 754–765 (GSGGSDGSGGSG) has biased composition (gly residues).

Belongs to the inturned family. Interacts with fuz and wdpcp; fuz, intu and wdpcp probably form the core CPLANE (ciliogenesis and planar polarity effectors) complex. As to expression, expressed in the neural plate during neural tube closure with subsequent strong expression in the ventral neural tube and in facial mesenchyme.

Its subcellular location is the cell surface. It is found in the cell membrane. The protein resides in the cytoplasm. The protein localises to the cytoskeleton. It localises to the cilium basal body. Functionally, plays a role in the definition of cell polarity via the planar cell polarity (PCP) cascade. Required for ciliogenesis by controlling the organization of the apical actin cytoskeleton and the positioning of the basal bodies at the apical cell surface, which in turn is essential for the normal orientation of elongating ciliary microtubules. Proposed to function as core component of a functional module called CPLANE (ciliogenesis and planar polarity effectors) involved in recruitment of peripheral IFT-A proteins to basal bodies. Controls the localization of both rhoa and disheveled in multi-ciliated cells. Has an indirect effect on hedgehog signaling. The protein is Protein inturned of Xenopus laevis (African clawed frog).